Consider the following 144-residue polypeptide: MAKSIPSAGLRLRLRLRRNARRRSRKSTRKIPKGVIHVQASFHNTIVTVTDVRGRVISWSSAGTCGFKSTRKGTPFAAQTAAGDAIRPVVDQGMQRAEVRIKGPGLGRDAALRAIRRSGIRLSCIRDVTPLPHNGCRPPKKRRV.

It belongs to the universal ribosomal protein uS11 family. As to quaternary structure, part of the 30S ribosomal subunit.

Its subcellular location is the plastid. The protein localises to the chloroplast. This Oenothera biennis (German evening primrose) protein is Small ribosomal subunit protein uS11c.